We begin with the raw amino-acid sequence, 439 residues long: MSGGESRSPDMSRAGDGCLGDGGDDEESDGDGGEVNPASADAESTQKKRKKRNKKKSKKKSKADSPGEQSSPPRIPLDKLFPSGNFPEGEVLEYQATARTTAAERRSNARQHWEDDTFLRNYRKAAEIHRQTRRWVHETAKPGVSLYDIAVGIEDSVRALLDNAGLETGEALKSGMGFPTGLCLNNQVAHYTPNPGQKPVLLQEQDVLTVDFGVHINGWIVDSAFTTAFDPTYDNLLAAVKDATNTGVKTAGIDVRISDVSAAIQEVMESYEVEIRGKTYRVKPIRNLSGHNIHQYRIHGGKSIPFVKNRDQTKMEEGEVFAIETFGSTGRGYIVDDVGVYGYGLNHNAPLNVPVALPSAKRLHKTIRENFGTIVFCRRYLERLNVEKYLAGMNCLVQQGVVEEYGPLMDVKGSYSAQFEHTFLLRGTHKEVFSRGDDY.

The segment at 1 to 87 (MSGGESRSPD…DKLFPSGNFP (87 aa)) is disordered. Positions 22 to 32 (GGDDEESDGDG) are enriched in acidic residues. Basic residues predominate over residues 47 to 61 (KKRKKRNKKKSKKKS). His-190 contributes to the substrate binding site. A divalent metal cation-binding residues include Asp-211, Asp-222, and His-291. His-299 contacts substrate. The a divalent metal cation site is built by Glu-324 and Glu-420.

The protein belongs to the peptidase M24A family. Methionine aminopeptidase eukaryotic type 2 subfamily. The cofactor is Co(2+). Zn(2+) serves as cofactor. Requires Mn(2+) as cofactor. It depends on Fe(2+) as a cofactor.

The protein resides in the cytoplasm. The enzyme catalyses Release of N-terminal amino acids, preferentially methionine, from peptides and arylamides.. Its function is as follows. Cotranslationally removes the N-terminal methionine from nascent proteins. The N-terminal methionine is often cleaved when the second residue in the primary sequence is small and uncharged (Met-Ala-, Cys, Gly, Pro, Ser, Thr, or Val). In Chaetomium globosum (strain ATCC 6205 / CBS 148.51 / DSM 1962 / NBRC 6347 / NRRL 1970) (Soil fungus), this protein is Methionine aminopeptidase 2-1.